The sequence spans 634 residues: Leucine--tRNA ligase subunit alpha (634 aa).

The 'HIGH' region motif lies at 43–51 (PSGRIHMGH).

Belongs to the class-I aminoacyl-tRNA synthetase family. As to quaternary structure, seems to consist of an alpha chain and a beta chain.

Its subcellular location is the cytoplasm. It carries out the reaction tRNA(Leu) + L-leucine + ATP = L-leucyl-tRNA(Leu) + AMP + diphosphate. This is Leucine--tRNA ligase subunit alpha (leuS) from Aquifex aeolicus (strain VF5).